Reading from the N-terminus, the 359-residue chain is DNA integrity scanning protein DisA (359 aa).

Residues 7–145 (DPTGRAVLRA…DGRRWVLEDS (139 aa)) form the DAC domain. Residues Gly74, Leu92, and 105-109 (TRHRT) contribute to the ATP site.

The protein belongs to the DisA family. Homooctamer. It depends on Mg(2+) as a cofactor.

The catalysed reaction is 2 ATP = 3',3'-c-di-AMP + 2 diphosphate. In terms of biological role, participates in a DNA-damage check-point. DisA forms globular foci that rapidly scan along the chromosomes searching for lesions. Functionally, also has diadenylate cyclase activity, catalyzing the condensation of 2 ATP molecules into cyclic di-AMP (c-di-AMP). c-di-AMP likely acts as a signaling molecule that may couple DNA integrity with a cellular process. This Beutenbergia cavernae (strain ATCC BAA-8 / DSM 12333 / CCUG 43141 / JCM 11478 / NBRC 16432 / NCIMB 13614 / HKI 0122) protein is DNA integrity scanning protein DisA.